Consider the following 332-residue polypeptide: MNKNFIESNLNKQELSFEVPLRPQCLTDFVGQDSIRDRLEVHIGAARQRGEVLGHCLFSGPPGLGKTTLASILSKAMESNLVLTSGPVIEKAGDLAGILTSLKTGDVLFIDEIHRLNRSVEEYLYQAMEDFALDLMIDSGPNARSIQVKLNQFTLAGATTRLGLLSEPLRSRFAFTCRLEYYDPMILQKILLRTSRILNVKIDSEAALEIAKRSRGTPRVANHLLRWVRDFAQIKANNYIDLSVANRALTMLSIDEKGLDEMDKKMLQTMIDHYSGGPVGINAIAASIGEEPSTVEEVYEPYLILQGLLKRTPRGREVTSLGYQHIVGSSQR.

The segment at 1–182 is large ATPase domain (RuvB-L); the sequence is MNKNFIESNL…FAFTCRLEYY (182 aa). Residues Leu21, Arg22, Gly63, Lys66, Thr67, Thr68, 129-131, Arg172, Tyr182, and Arg219 contribute to the ATP site; that span reads EDF. A Mg(2+)-binding site is contributed by Thr67. Residues 183–253 are small ATPAse domain (RuvB-S); it reads DPMILQKILL…VANRALTMLS (71 aa). The tract at residues 256 to 332 is head domain (RuvB-H); it reads EKGLDEMDKK…YQHIVGSSQR (77 aa). Arg311 and Arg316 together coordinate DNA.

The protein belongs to the RuvB family. In terms of assembly, homohexamer. Forms an RuvA(8)-RuvB(12)-Holliday junction (HJ) complex. HJ DNA is sandwiched between 2 RuvA tetramers; dsDNA enters through RuvA and exits via RuvB. An RuvB hexamer assembles on each DNA strand where it exits the tetramer. Each RuvB hexamer is contacted by two RuvA subunits (via domain III) on 2 adjacent RuvB subunits; this complex drives branch migration. In the full resolvosome a probable DNA-RuvA(4)-RuvB(12)-RuvC(2) complex forms which resolves the HJ.

It is found in the cytoplasm. It carries out the reaction ATP + H2O = ADP + phosphate + H(+). In terms of biological role, the RuvA-RuvB-RuvC complex processes Holliday junction (HJ) DNA during genetic recombination and DNA repair, while the RuvA-RuvB complex plays an important role in the rescue of blocked DNA replication forks via replication fork reversal (RFR). RuvA specifically binds to HJ cruciform DNA, conferring on it an open structure. The RuvB hexamer acts as an ATP-dependent pump, pulling dsDNA into and through the RuvAB complex. RuvB forms 2 homohexamers on either side of HJ DNA bound by 1 or 2 RuvA tetramers; 4 subunits per hexamer contact DNA at a time. Coordinated motions by a converter formed by DNA-disengaged RuvB subunits stimulates ATP hydrolysis and nucleotide exchange. Immobilization of the converter enables RuvB to convert the ATP-contained energy into a lever motion, pulling 2 nucleotides of DNA out of the RuvA tetramer per ATP hydrolyzed, thus driving DNA branch migration. The RuvB motors rotate together with the DNA substrate, which together with the progressing nucleotide cycle form the mechanistic basis for DNA recombination by continuous HJ branch migration. Branch migration allows RuvC to scan DNA until it finds its consensus sequence, where it cleaves and resolves cruciform DNA. The polypeptide is Holliday junction branch migration complex subunit RuvB (Protochlamydia amoebophila (strain UWE25)).